The chain runs to 614 residues: Kelch-like protein 40 (614 aa).

The BTB domain maps to 33-100; the sequence is IDCVLKIQGK…IYTSEIEITE (68 aa). A BACK domain is found at 135–237; that stretch reads CLAIFRLGLL…PQDYIKNKVE (103 aa). Kelch repeat units lie at residues 353-405, 406-455, 456-503, 505-550, and 552-606; these read QLFV…ESDN, SIYL…SHDN, LVYV…VHKG, ILIA…SMNG, and LYAI…AARL.

Belongs to the KLHL40 family. As to quaternary structure, component of the BCR(KLHL40) E3 ubiquitin ligase complex.

Its subcellular location is the cytoplasm. It localises to the myofibril. The protein resides in the sarcomere. The protein localises to the a band. It is found in the i band. Substrate-specific adapter of a BCR (BTB-CUL3-RBX1) E3 ubiquitin ligase complex that acts as a key regulator of skeletal muscle development. The polypeptide is Kelch-like protein 40 (klhl40) (Xenopus tropicalis (Western clawed frog)).